A 512-amino-acid chain; its full sequence is NAD(P)H-quinone oxidoreductase chain 4, chloroplastic (512 aa).

14 consecutive transmembrane segments (helical) span residues 4-24, 34-54, 87-107, 111-131, 134-154, 167-187, 210-230, 241-261, 273-293, 312-332, 333-353, 373-395, 416-436, and 462-482; these read LPWLTIIVLFPILAGLLIPFI, WYALGVGILDFLLITYIFGYH, MPLVLLTGFVTTLAILGAWPV, AKLFYFLMLAMYSGQIGVFVS, LLLFFFMWELELIPVYLLLLV, FILYTAIGSIFILLAGLTMAF, ILLYIGFLIAYAVKLPAFPLH, HYSTCMLLAGILLKMGGYALI, LIFAPFLIIIGVINIIYAALT, MGFVLIGIGSLTNLGLSGAVL, QMISHGLIGASLFFLAGTTYD, TFAMFTTCSLASLALPGMSGFVA, IITFLEGIGIILTPIYLLSML, and IFVITCLVLPILGIGIYPKMA.

Belongs to the complex I subunit 4 family.

Its subcellular location is the plastid. It is found in the chloroplast thylakoid membrane. The enzyme catalyses a plastoquinone + NADH + (n+1) H(+)(in) = a plastoquinol + NAD(+) + n H(+)(out). It carries out the reaction a plastoquinone + NADPH + (n+1) H(+)(in) = a plastoquinol + NADP(+) + n H(+)(out). This Chlorokybus atmophyticus (Soil alga) protein is NAD(P)H-quinone oxidoreductase chain 4, chloroplastic.